The chain runs to 200 residues: Imidazoleglycerol-phosphate dehydratase (200 aa).

The protein belongs to the imidazoleglycerol-phosphate dehydratase family.

It localises to the cytoplasm. It catalyses the reaction D-erythro-1-(imidazol-4-yl)glycerol 3-phosphate = 3-(imidazol-4-yl)-2-oxopropyl phosphate + H2O. The protein operates within amino-acid biosynthesis; L-histidine biosynthesis; L-histidine from 5-phospho-alpha-D-ribose 1-diphosphate: step 6/9. This is Imidazoleglycerol-phosphate dehydratase from Chlorobium phaeovibrioides (strain DSM 265 / 1930) (Prosthecochloris vibrioformis (strain DSM 265)).